The chain runs to 163 residues: Nucleotide-binding protein DvMF_3058 (163 aa).

Belongs to the YajQ family.

Nucleotide-binding protein. The sequence is that of Nucleotide-binding protein DvMF_3058 from Nitratidesulfovibrio vulgaris (strain DSM 19637 / Miyazaki F) (Desulfovibrio vulgaris).